The following is a 678-amino-acid chain: GAS2-like protein 1 (678 aa).

At Ala2 the chain carries N-acetylalanine. The Calponin-homology (CH) domain occupies 27–148; that stretch reads EAMKEDLADW…CLLEVARRGA (122 aa). The region spanning 203 to 275 is the GAR domain; sequence NDLRNLDELV…HYLDKHDPCR (73 aa). A compositionally biased stretch (polar residues) spans 276–291; the sequence is CSSSTHRLPQQRTGTF. Disordered stretches follow at residues 276–524 and 538–678; these read CSSS…FRRL and AASH…DSSM. Residues Ser306 and Ser316 each carry the phosphoserine modification. The segment covering 327–340 has biased composition (basic and acidic residues); that stretch reads GTKEGPETPLRPRD. The residue at position 334 (Thr334) is a Phosphothreonine. Ser352 and Ser355 each carry phosphoserine. The segment covering 354-365 has biased composition (low complexity); it reads DSDSSASSAQSG. Residues 370 to 381 are compositionally biased toward basic and acidic residues; sequence RSDDSATGSRRE. Over residues 392-403 the composition is skewed to low complexity; it reads PASPRRPTAPRS. Ser394 bears the Phosphoserine mark. Residues 404-413 are compositionally biased toward basic and acidic residues; it reads QSRDRLDRGR. Phosphoserine is present on residues Ser436 and Ser438. Over residues 437 to 454 the composition is skewed to basic and acidic residues; the sequence is QSREEQAVLMVRRDRDGQ. Residues 461 to 471 show a composition bias toward gly residues; it reads GRGGGGSGGSG. Phosphoserine occurs at positions 482 and 489. The span at 485-495 shows a compositional bias: pro residues; sequence APRPSRGPSPG. Arg490 is modified (omega-N-methylarginine). Phosphoserine is present on Ser493. Position 501 is a phosphothreonine (Thr501). Arg507 is subject to Omega-N-methylarginine. 2 stretches are compositionally biased toward low complexity: residues 509-519 and 554-568; these read PLQLDPQQEQQ and DSAY…SSLS. Arg630 is modified (omega-N-methylarginine). A compositionally biased stretch (basic and acidic residues) spans 631–641; sequence GRMDTQPDRKP. Ser654 is subject to Phosphoserine. A compositionally biased stretch (polar residues) spans 666–678; the sequence is HSVTPRTEPDSSM.

The protein belongs to the GAS2 family. As to quaternary structure, interacts with MAPRE1.

The protein localises to the cytoplasm. The protein resides in the cytoskeleton. Its subcellular location is the stress fiber. Seems to be involved in the cross-linking of microtubules and microfilaments. Regulates microtubule dynamics and stability by interacting with microtubule plus-end tracking proteins, such as MAPRE1, to regulate microtubule growth along actin stress fibers. This chain is GAS2-like protein 1 (Gas2l1), found in Mus musculus (Mouse).